The primary structure comprises 21 residues: Ocellatin-4 (21 aa).

An Isoleucine amide modification is found at isoleucine 21.

Expressed by the skin dorsal glands.

Its subcellular location is the secreted. Its function is as follows. Has hemolytic activity against human erythrocytes (HC50=14.3 uM). Has antibacterial activity against the Gram-positive bacterium S.aureus ATCC 25923 (MIC=64 uM) and the Gram-negative bacterium E.coli ATCC 25922 (MIC=64 uM). This is Ocellatin-4 from Leptodactylus ocellatus (Argus frog).